A 216-amino-acid chain; its full sequence is Pyrrolidone-carboxylate peptidase (216 aa).

Residues Glu-80, Cys-143, and His-168 contribute to the active site.

The protein belongs to the peptidase C15 family. As to quaternary structure, homotetramer.

It localises to the cytoplasm. The catalysed reaction is Release of an N-terminal pyroglutamyl group from a polypeptide, the second amino acid generally not being Pro.. Functionally, removes 5-oxoproline from various penultimate amino acid residues except L-proline. The chain is Pyrrolidone-carboxylate peptidase from Cupriavidus pinatubonensis (strain JMP 134 / LMG 1197) (Cupriavidus necator (strain JMP 134)).